A 287-amino-acid chain; its full sequence is Small ribosomal subunit protein uS10m (287 aa).

The transit peptide at 1–33 (MSLFSPHRILLRTGSAFQLATATRALLSTSSQL) directs the protein to the mitochondrion. Residues 33–43 (LRNTKNAQSGL) show a composition bias toward polar residues. A disordered region spans residues 33–84 (LRNTKNAQSGLAEQARAEEPVASSPSQTTRPEQKSLEEETTKQTQTHADSTV). The span at 63-73 (PEQKSLEEETT) shows a compositional bias: basic and acidic residues. Over residues 74–84 (KQTQTHADSTV) the composition is skewed to polar residues.

The protein belongs to the universal ribosomal protein uS10 family. As to quaternary structure, part of the mitochondrial small ribosomal subunit.

Its subcellular location is the mitochondrion. Its function is as follows. Involved in mitochondrial genome encoded proteins translation. Involved in the binding of tRNA to the ribosomes. This chain is Small ribosomal subunit protein uS10m (rsm10), found in Emericella nidulans (strain FGSC A4 / ATCC 38163 / CBS 112.46 / NRRL 194 / M139) (Aspergillus nidulans).